Reading from the N-terminus, the 157-residue chain is Phosphopantetheine adenylyltransferase (157 aa).

Serine 8 is a substrate binding site. ATP contacts are provided by residues 8–9 (SF) and histidine 16. Substrate contacts are provided by lysine 40, threonine 72, and arginine 86. ATP-binding positions include 87-89 (GLR), glutamate 97, and 122-128 (YSFLSSS).

The protein belongs to the bacterial CoaD family. In terms of assembly, homohexamer. Mg(2+) serves as cofactor.

It localises to the cytoplasm. It catalyses the reaction (R)-4'-phosphopantetheine + ATP + H(+) = 3'-dephospho-CoA + diphosphate. Its pathway is cofactor biosynthesis; coenzyme A biosynthesis; CoA from (R)-pantothenate: step 4/5. Its function is as follows. Reversibly transfers an adenylyl group from ATP to 4'-phosphopantetheine, yielding dephospho-CoA (dPCoA) and pyrophosphate. This Gloeothece citriformis (strain PCC 7424) (Cyanothece sp. (strain PCC 7424)) protein is Phosphopantetheine adenylyltransferase.